A 338-amino-acid chain; its full sequence is Glycerol-3-phosphate dehydrogenase [NAD(P)+] (338 aa).

Residues tryptophan 12, histidine 33, and lysine 110 each coordinate NADPH. The sn-glycerol 3-phosphate site is built by lysine 110, glycine 142, and serine 144. Alanine 146 contributes to the NADPH binding site. Sn-glycerol 3-phosphate-binding residues include lysine 197, aspartate 250, serine 260, arginine 261, and asparagine 262. Residue lysine 197 is the Proton acceptor of the active site. Position 261 (arginine 261) interacts with NADPH. Positions 286 and 288 each coordinate NADPH.

This sequence belongs to the NAD-dependent glycerol-3-phosphate dehydrogenase family.

The protein resides in the cytoplasm. It carries out the reaction sn-glycerol 3-phosphate + NAD(+) = dihydroxyacetone phosphate + NADH + H(+). The enzyme catalyses sn-glycerol 3-phosphate + NADP(+) = dihydroxyacetone phosphate + NADPH + H(+). It participates in membrane lipid metabolism; glycerophospholipid metabolism. Functionally, catalyzes the reduction of the glycolytic intermediate dihydroxyacetone phosphate (DHAP) to sn-glycerol 3-phosphate (G3P), the key precursor for phospholipid synthesis. The protein is Glycerol-3-phosphate dehydrogenase [NAD(P)+] of Acidobacterium capsulatum (strain ATCC 51196 / DSM 11244 / BCRC 80197 / JCM 7670 / NBRC 15755 / NCIMB 13165 / 161).